The primary structure comprises 98 residues: NADH-ubiquinone oxidoreductase chain 4L (98 aa).

Helical transmembrane passes span 1–21, 25–45, and 57–79; these read MLAI…GVLV, HLMS…ILMT, and SMAP…ALLV.

The protein belongs to the complex I subunit 4L family. In terms of assembly, core subunit of respiratory chain NADH dehydrogenase (Complex I) which is composed of 45 different subunits.

Its subcellular location is the mitochondrion inner membrane. It carries out the reaction a ubiquinone + NADH + 5 H(+)(in) = a ubiquinol + NAD(+) + 4 H(+)(out). In terms of biological role, core subunit of the mitochondrial membrane respiratory chain NADH dehydrogenase (Complex I) which catalyzes electron transfer from NADH through the respiratory chain, using ubiquinone as an electron acceptor. Part of the enzyme membrane arm which is embedded in the lipid bilayer and involved in proton translocation. This is NADH-ubiquinone oxidoreductase chain 4L (MT-ND4L) from Dasyurus hallucatus (Northern quoll).